The chain runs to 171 residues: Early E1A protein (171 aa).

Residues 40–48 (PTLHDLFDV) form an interaction with RB1 in competition with E2F1 region. Residues 67-96 (DTDSSASTEGDSGFSPLSTPPVSPIPPHPT) form a disordered region. Residues 84–96 (STPPVSPIPPHPT) show a composition bias toward pro residues. Positions 106-110 (LLCLE) match the LXCXE motif, interaction with host RB1 motif. A zinc finger spans residues 145-163 (CLRCAFYQEQDDNALCGLC). A Nuclear localization signal motif is present at residues 166–171 (KGPCRR).

It belongs to the adenoviridae E1A protein family. As to quaternary structure, interacts with host UBE2I; this interaction interferes with polySUMOylation. Interacts with host RB1; this interaction induces the aberrant dissociation of RB1-E2F1 complex thereby disrupting the activity of RB1 and activating E2F1-regulated genes. Interacts with host ATF7; the interaction enhances ATF7-mediated viral transactivation activity which requires the zinc binding domains of both proteins. Isoform early E1A 32 kDa protein and isoform early E1A 26 kDa protein interact (via N-terminus) with CUL1 and E3 ubiquitin ligase RBX1; these interactions inhibit RBX1-CUL1-dependent elongation reaction of ubiquitin chains and attenuate ubiquitination of SCF(FBXW7) target proteins. Interacts (via PXLXP motif) with host ZMYND11/BS69 (via MYND-type zinc finger); this interaction inhibits E1A mediated transactivation. Interacts with host EP300; this interaction stimulates the acetylation of RB1 by recruiting EP300 and RB1 into a multimeric-protein complex. Interacts with host CTBP1 and CTBP2; this interaction seems to potentiate viral replication. Interacts with host DCAF7. Interacts with host DYRK1A. Interacts with host KPNA4; this interaction allows E1A import into the host nucleus. Interacts with host EP400; this interaction stabilizes MYC. Interacts with host TBP protein; this interaction probably disrupts the TBP-TATA complex.

It is found in the host nucleus. In terms of biological role, plays a role in viral genome replication by driving entry of quiescent cells into the cell cycle. Stimulation of progression from G1 to S phase allows the virus to efficiently use the cellular DNA replicating machinery to achieve viral genome replication. E1A protein has both transforming and trans-activating activities. Induces the disassembly of the E2F1 transcription factor from RB1 by direct competition for the same binding site on RB1, with subsequent transcriptional activation of E2F1-regulated S-phase genes and of the E2 region of the adenoviral genome. Release of E2F1 leads to the ARF-mediated inhibition of MDM2 and causes TP53/p53 to accumulate because it is not targeted for degradation by MDM2-mediated ubiquitination anymore. This increase in TP53, in turn, would arrest the cell proliferation and direct its death but this effect is counteracted by the viral protein E1B-55K. Inactivation of the ability of RB1 to arrest the cell cycle is critical for cellular transformation, uncontrolled cellular growth and proliferation induced by viral infection. Interaction with RBX1 and CUL1 inhibits ubiquitination of the proteins targeted by SCF(FBXW7) ubiquitin ligase complex, and may be linked to unregulated host cell proliferation. The tumorigenesis-restraining activity of E1A may be related to the disruption of the host CtBP-CtIP complex through the CtBP binding motif. In Canis lupus familiaris (Dog), this protein is Early E1A protein.